Here is a 1021-residue protein sequence, read N- to C-terminus: Translation initiation factor IF-2 (1021 aa).

The interval 50–422 is disordered; it reads AFPAEGGSAS…RMGAMVPRGN (373 aa). The segment covering 57–71 has biased composition (gly residues); it reads SASGGRPGGRPGPGN. Residues 75-95 are compositionally biased toward pro residues; it reads PAPPRPGLAPRPGPRPVPGRP. The span at 96–112 shows a compositional bias: low complexity; sequence GPAARPGGPAAPSAPAA. Residues 113–129 are compositionally biased toward pro residues; the sequence is PSAPAPGAPAASPPASQ. Composition is skewed to low complexity over residues 130-159, 167-178, and 187-196; these read PRPI…ASGP, GGPAAPGRARPG, and SAPSAPSAGG. Positions 198 to 208 are enriched in pro residues; that stretch reads RPGPRPGPRPS. A compositionally biased stretch (low complexity) spans 219 to 233; it reads SAGPRQSAGQSGSGP. 2 stretches are compositionally biased toward pro residues: residues 234-254 and 262-273; these read ASPP…PRPG and RPSPGSMPPRPG. Composition is skewed to gly residues over residues 275–291 and 306–389; these read RPGG…GSGG and GAPG…GGRG. Over residues 390-401 the composition is skewed to basic residues; that stretch reads RPGRQRKSKRAK. Positions 514–686 constitute a tr-type G domain; sequence IRPPVVTVMG…IILTADASLD (173 aa). Positions 523-530 are G1; sequence GHVDHGKT. A GTP-binding site is contributed by 523–530; that stretch reads GHVDHGKT. The G2 stretch occupies residues 548–552; that stretch reads GITQH. The tract at residues 573–576 is G3; that stretch reads DTPG. Residues 573-577 and 627-630 contribute to the GTP site; these read DTPGH and NKVD. The interval 627–630 is G4; it reads NKVD. Positions 663–665 are G5; sequence SAR.

It belongs to the TRAFAC class translation factor GTPase superfamily. Classic translation factor GTPase family. IF-2 subfamily.

Its subcellular location is the cytoplasm. In terms of biological role, one of the essential components for the initiation of protein synthesis. Protects formylmethionyl-tRNA from spontaneous hydrolysis and promotes its binding to the 30S ribosomal subunits. Also involved in the hydrolysis of GTP during the formation of the 70S ribosomal complex. The chain is Translation initiation factor IF-2 from Frankia alni (strain DSM 45986 / CECT 9034 / ACN14a).